The chain runs to 342 residues: tRNA N6-adenosine threonylcarbamoyltransferase (342 aa).

Fe cation-binding residues include histidine 120 and histidine 124. Residues 142–146 (VVSGG), aspartate 175, glycine 188, aspartate 192, and asparagine 281 each bind substrate. A Fe cation-binding site is contributed by aspartate 310.

Belongs to the KAE1 / TsaD family. Fe(2+) is required as a cofactor.

It localises to the cytoplasm. It carries out the reaction L-threonylcarbamoyladenylate + adenosine(37) in tRNA = N(6)-L-threonylcarbamoyladenosine(37) in tRNA + AMP + H(+). Required for the formation of a threonylcarbamoyl group on adenosine at position 37 (t(6)A37) in tRNAs that read codons beginning with adenine. Is involved in the transfer of the threonylcarbamoyl moiety of threonylcarbamoyl-AMP (TC-AMP) to the N6 group of A37, together with TsaE and TsaB. TsaD likely plays a direct catalytic role in this reaction. The chain is tRNA N6-adenosine threonylcarbamoyltransferase from Geobacillus kaustophilus (strain HTA426).